Reading from the N-terminus, the 365-residue chain is Eukaryotic translation initiation factor 3 subunit H (365 aa).

Residues 11-160 (VQVEALVVMK…LRAFRLSPQF (150 aa)) form the MPN domain. A coiled-coil region spans residues 273-303 (YQRSLAREQTKIAAWQAKRKAENATRAQLKQ).

It belongs to the eIF-3 subunit H family. In terms of assembly, component of the eukaryotic translation initiation factor 3 (eIF-3) complex.

It localises to the cytoplasm. Functionally, component of the eukaryotic translation initiation factor 3 (eIF-3) complex, which is involved in protein synthesis of a specialized repertoire of mRNAs and, together with other initiation factors, stimulates binding of mRNA and methionyl-tRNAi to the 40S ribosome. The eIF-3 complex specifically targets and initiates translation of a subset of mRNAs involved in cell proliferation. The sequence is that of Eukaryotic translation initiation factor 3 subunit H from Coccidioides immitis (strain RS) (Valley fever fungus).